Here is a 66-residue protein sequence, read N- to C-terminus: Prokaryotic ubiquitin-like protein Pup (66 aa).

The span at 1–10 (MAGQEQQSSS) shows a compositional bias: low complexity. Residues 1 to 39 (MAGQEQQSSSPREEEHEVADAPVPVPSSPQASAHTDGVD) form a disordered region. The ARC ATPase binding stretch occupies residues 23 to 60 (VPVPSSPQASAHTDGVDDLLDEIDGVLESNAEEFVRGF). The residue at position 66 (Q66) is a Deamidated glutamine. Q66 is covalently cross-linked (Isoglutamyl lysine isopeptide (Gln-Lys) (interchain with K-? in acceptor proteins)).

This sequence belongs to the prokaryotic ubiquitin-like protein family. As to quaternary structure, strongly interacts with the proteasome-associated ATPase ARC through a hydrophobic interface; the interacting region of Pup lies in its C-terminal half. There is one Pup binding site per ARC hexamer ring. In terms of processing, is modified by deamidation of its C-terminal glutamine to glutamate by the deamidase Dop, a prerequisite to the subsequent pupylation process.

Its pathway is protein degradation; proteasomal Pup-dependent pathway. Its function is as follows. Protein modifier that is covalently attached to lysine residues of substrate proteins, thereby targeting them for proteasomal degradation. The tagging system is termed pupylation. The polypeptide is Prokaryotic ubiquitin-like protein Pup (Renibacterium salmoninarum (strain ATCC 33209 / DSM 20767 / JCM 11484 / NBRC 15589 / NCIMB 2235)).